The sequence spans 392 residues: HCLS1-binding protein 3 (392 aa).

Position 1 is an N-acetylmethionine (methionine 1). A phosphoserine mark is found at serine 3, serine 139, and serine 194. In terms of domain architecture, PX spans 19 to 142 (GLDLTVPQHQ…EFLGTRSPGA (124 aa)). 3 disordered regions span residues 138–162 (RSPG…QTGN), 174–265 (DQVA…PLKL), and 319–364 (GAEP…KPQE). Over residues 190-201 (DAEESLEEEEAL) the composition is skewed to acidic residues. The span at 208-220 (RSKKPKKHPKVAV) shows a compositional bias: basic residues. Serine 249 is modified (phosphoserine). Over residues 325-335 (KPQLKPKPPVA) the composition is skewed to pro residues. Lysine 337 carries the post-translational modification N6-acetyllysine.

As to quaternary structure, binds HCLS1. Interacts with the SH3 domain of HCLS1 in vitro.

Its function is as follows. May be a modulator of IL-2 signaling. This Homo sapiens (Human) protein is HCLS1-binding protein 3 (HS1BP3).